Reading from the N-terminus, the 462-residue chain is uncharacterized protein (462 aa).

In terms of domain architecture, TRAM spans 12 to 70; the sequence is MLKKNDIIQVAISDLSHEGAGVAKHDGFVFFVDNALPEEVIDMRVLKVNKNSGFGKVEA. Q294, Y323, E344, and D392 together coordinate S-adenosyl-L-methionine. Catalysis depends on C419, which acts as the Nucleophile.

The protein belongs to the class I-like SAM-binding methyltransferase superfamily. RNA M5U methyltransferase family.

This is an uncharacterized protein from Streptococcus pyogenes serotype M18 (strain MGAS8232).